Consider the following 80-residue polypeptide: Cell division activator CedA (80 aa).

The protein belongs to the CedA family.

Functionally, activates the cell division inhibited by chromosomal DNA over-replication. This chain is Cell division activator CedA, found in Escherichia coli (strain SMS-3-5 / SECEC).